The sequence spans 93 residues: Large ribosomal subunit protein mL41 (93 aa).

Residues 1 to 13 (MHQSLLCFGARRL) constitute a mitochondrion transit peptide.

It belongs to the mitochondrion-specific ribosomal protein mL41 family. Component of the mitochondrial large ribosomal subunit (mt-LSU). Mature yeast 74S mitochondrial ribosomes consist of a small (37S) and a large (54S) subunit. The 37S small subunit contains a 15S ribosomal RNA (15S mt-rRNA) and at least 32 different proteins. The 54S large subunit contains a 21S rRNA (21S mt-rRNA) and at least 45 different proteins.

It is found in the mitochondrion. In terms of biological role, component of the mitochondrial ribosome (mitoribosome), a dedicated translation machinery responsible for the synthesis of mitochondrial genome-encoded proteins, including at least some of the essential transmembrane subunits of the mitochondrial respiratory chain. The mitoribosomes are attached to the mitochondrial inner membrane and translation products are cotranslationally integrated into the membrane. The chain is Large ribosomal subunit protein mL41 (mrpl27) from Schizosaccharomyces pombe (strain 972 / ATCC 24843) (Fission yeast).